The following is a 373-amino-acid chain: Chorismate synthase (373 aa).

An NADP(+)-binding site is contributed by Arg46. FMN contacts are provided by residues 123 to 125, 250 to 251, Gly295, 310 to 314, and Arg337; these read RSS, NA, and KPTPS.

This sequence belongs to the chorismate synthase family. It depends on FMNH2 as a cofactor.

It catalyses the reaction 5-O-(1-carboxyvinyl)-3-phosphoshikimate = chorismate + phosphate. Its pathway is metabolic intermediate biosynthesis; chorismate biosynthesis; chorismate from D-erythrose 4-phosphate and phosphoenolpyruvate: step 7/7. In terms of biological role, catalyzes the anti-1,4-elimination of the C-3 phosphate and the C-6 proR hydrogen from 5-enolpyruvylshikimate-3-phosphate (EPSP) to yield chorismate, which is the branch point compound that serves as the starting substrate for the three terminal pathways of aromatic amino acid biosynthesis. This reaction introduces a second double bond into the aromatic ring system. The chain is Chorismate synthase from Methanococcus aeolicus (strain ATCC BAA-1280 / DSM 17508 / OCM 812 / Nankai-3).